Here is a 370-residue protein sequence, read N- to C-terminus: Dual-specificity RNA methyltransferase RlmN (370 aa).

Glu93 serves as the catalytic Proton acceptor. Residues 99 to 331 (DRKRGTLCVS…TRVRRTRGDD (233 aa)) enclose the Radical SAM core domain. Cys106 and Cys336 are joined by a disulfide. [4Fe-4S] cluster contacts are provided by Cys113, Cys117, and Cys120. S-adenosyl-L-methionine-binding positions include 162–163 (GE), Ser194, 216–218 (SLH), and Asn293. The active-site S-methylcysteine intermediate is the Cys336.

It belongs to the radical SAM superfamily. RlmN family. [4Fe-4S] cluster serves as cofactor.

Its subcellular location is the cytoplasm. The catalysed reaction is adenosine(2503) in 23S rRNA + 2 reduced [2Fe-2S]-[ferredoxin] + 2 S-adenosyl-L-methionine = 2-methyladenosine(2503) in 23S rRNA + 5'-deoxyadenosine + L-methionine + 2 oxidized [2Fe-2S]-[ferredoxin] + S-adenosyl-L-homocysteine. The enzyme catalyses adenosine(37) in tRNA + 2 reduced [2Fe-2S]-[ferredoxin] + 2 S-adenosyl-L-methionine = 2-methyladenosine(37) in tRNA + 5'-deoxyadenosine + L-methionine + 2 oxidized [2Fe-2S]-[ferredoxin] + S-adenosyl-L-homocysteine. Its function is as follows. Specifically methylates position 2 of adenine 2503 in 23S rRNA and position 2 of adenine 37 in tRNAs. m2A2503 modification seems to play a crucial role in the proofreading step occurring at the peptidyl transferase center and thus would serve to optimize ribosomal fidelity. The sequence is that of Dual-specificity RNA methyltransferase RlmN from Coxiella burnetii (strain RSA 493 / Nine Mile phase I).